We begin with the raw amino-acid sequence, 300 residues long: Protein phosphatase 2C 1 (300 aa).

Residues 23–298 enclose the PPM-type phosphatase domain; sequence IFAASEMQGW…DNMTTILVYL (276 aa). Mn(2+)-binding residues include Asp57, Gly58, Asp237, and Asp289.

It belongs to the PP2C family. The cofactor is Mg(2+). Requires Mn(2+) as cofactor. In terms of processing, the N-terminus is blocked.

Its subcellular location is the membrane. The catalysed reaction is O-phospho-L-seryl-[protein] + H2O = L-seryl-[protein] + phosphate. The enzyme catalyses O-phospho-L-threonyl-[protein] + H2O = L-threonyl-[protein] + phosphate. In terms of biological role, serine and threonine phosphatase. The sequence is that of Protein phosphatase 2C 1 from Paramecium tetraurelia.